Here is a 391-residue protein sequence, read N- to C-terminus: ATP-sensitive inward rectifier potassium channel 1 (391 aa).

Residues 1–77 lie on the Cytoplasmic side of the membrane; it reads MGASERSVFR…IWTTVLDLKW (77 aa). Residue Ser44 is modified to Phosphoserine; by SGK1. Residues 78–102 traverse the membrane as a helical segment; sequence RYKMTVFITAFLGSWFLFGLLWYVV. Topologically, residues 103–127 are extracellular; that stretch reads AYVHKDLPEFYPPDNRTPCVENING. N-linked (GlcNAc...) asparagine glycosylation occurs at Asn117. The segment at residues 128–139 is an intramembrane region (helical; Pore-forming); sequence MTSAFLFSLETQ. An intramembrane region (pore-forming) is located at residues 140-146; it reads VTIGYGF. The short motif at 141–146 is the Selectivity filter element; it reads TIGYGF. Over 147-155 the chain is Extracellular; sequence RFVTEQCAT. The chain crosses the membrane as a helical span at residues 156 to 177; sequence AIFLLIFQSILGVIINSFMCGA. At 178-391 the chain is on the cytoplasmic side; that stretch reads ILAKISRPKK…EVDETDDTQM (214 aa). The polyphosphoinositide (PIP2)-binding stretch occupies residues 180–207; sequence AKISRPKKRAKTITFSKNAVISKRGGKL. 223–230 is a binding site for ATP; that stretch reads GSHIYGKL.

It belongs to the inward rectifier-type potassium channel (TC 1.A.2.1) family. KCNJ1 subfamily. Interacts with SGK1 and SLC9A3R2/NHERF2. In terms of processing, phosphorylation at Ser-44 by SGK1 is necessary for its expression at the cell membrane. In terms of tissue distribution, mainly in kidney (renal cortex, medulla and papilla). As to expression, kidney.

It localises to the cell membrane. It catalyses the reaction K(+)(in) = K(+)(out). Its activity is regulated as follows. Inhibited by WNK3. Activated by phosphatidylinositol 4,5 biphosphate (PtdIns(4,5)P2). Its function is as follows. Inward rectifier potassium channels are characterized by a greater tendency to allow potassium to flow into the cell rather than out of it. Their voltage dependence is regulated by the concentration of extracellular potassium; as external potassium is raised, the voltage range of the channel opening shifts to more positive voltages. The inward rectification is mainly due to the blockage of outward current by internal magnesium. This channel is activated by internal ATP and can be blocked by external barium. In the kidney, probably plays a major role in potassium homeostasis. In terms of biological role, inward rectifier potassium channels are characterized by a greater tendency to allow potassium to flow into the cell rather than out of it. Their voltage dependence is regulated by the concentration of extracellular potassium; as external potassium is raised, the voltage range of the channel opening shifts to more positive voltages. This is ATP-sensitive inward rectifier potassium channel 1 (Kcnj1) from Rattus norvegicus (Rat).